We begin with the raw amino-acid sequence, 341 residues long: 2-dehydro-3-deoxy-L-galactonate 5-dehydrogenase (341 aa).

Cys-37 serves as a coordination point for Zn(2+). Catalysis depends on charge relay system residues Thr-39 and His-42. Zn(2+)-binding residues include His-60, Glu-61, Cys-90, Cys-93, Cys-96, and Cys-104.

The protein belongs to the zinc-containing alcohol dehydrogenase family. Zn(2+) serves as cofactor.

The enzyme catalyses 2-dehydro-3-deoxy-L-galactonate + NAD(+) = 3-deoxy-D-glycero-2,5-hexodiulosonate + NADH + H(+). Functionally, involved in the degradation of 3,6-anhydro-L-galactose, which is the major monomeric sugar of red macroalgae. Catalyzes the third step of the pathway, the NAD(+)-dependent oxidation of 2-dehydro-3-deoxy-L-galactonate (L-KDGal) to 3-deoxy-D-glycero-2,5-hexodiulosonate (L-DDGal). The sequence is that of 2-dehydro-3-deoxy-L-galactonate 5-dehydrogenase from Pseudoalteromonas atlantica (strain T6c / ATCC BAA-1087).